The chain runs to 242 residues: Phosphate import ATP-binding protein PstB 1 (242 aa).

Positions 1–237 (MDLYYGSYRA…PKDQRTEDYI (237 aa)) constitute an ABC transporter domain. 28–35 (GPSGCGKS) lines the ATP pocket.

This sequence belongs to the ABC transporter superfamily. Phosphate importer (TC 3.A.1.7) family. As to quaternary structure, the complex is composed of two ATP-binding proteins (PstB), two transmembrane proteins (PstC and PstA) and a solute-binding protein (PstS).

It localises to the cell membrane. The enzyme catalyses phosphate(out) + ATP + H2O = ADP + 2 phosphate(in) + H(+). Part of the ABC transporter complex PstSACB involved in phosphate import. Responsible for energy coupling to the transport system. This is Phosphate import ATP-binding protein PstB 1 from Symbiobacterium thermophilum (strain DSM 24528 / JCM 14929 / IAM 14863 / T).